The following is a 1132-amino-acid chain: Major DNA-binding protein (1132 aa).

Positions 1112–1132 (VLKCDETETETDEPMTKKNRL) are required for nuclear localization.

This sequence belongs to the herpesviridae major DNA-binding protein family. As to quaternary structure, homooligomers. Forms double-helical filaments necessary for the formation of replication compartments within the host nucleus. Interacts with the origin-binding protein. Interacts with the helicase primase complex; this interaction stimulates primer synthesis activity of the helicase-primase complex. Interacts with the DNA polymerase. Interacts with the alkaline exonuclease; this interaction increases its nuclease processivity.

It is found in the host nucleus. Functionally, single-stranded DNA-binding protein required for DNA replication. Its function is as follows. Plays several crucial roles in viral infection. Participates in the opening of the viral DNA origin to initiate replication by interacting with the origin-binding protein. May disrupt loops, hairpins and other secondary structures present on ssDNA to reduce and eliminate pausing of viral DNA polymerase at specific sites during elongation. Promotes viral DNA recombination by performing strand-transfer, characterized by the ability to transfer a DNA strand from a linear duplex to a complementary single-stranded DNA circle. Can also catalyze the renaturation of complementary single strands. Additionally, reorganizes the host cell nucleus, leading to the formation of prereplicative sites and replication compartments. This process is driven by the protein which can form double-helical filaments in the absence of DNA. This is Major DNA-binding protein from Human herpesvirus 6A (strain Uganda-1102) (HHV-6 variant A).